The primary structure comprises 375 residues: Serpin B5 (375 aa).

Residues asparagine 99, asparagine 133, asparagine 188, asparagine 298, and asparagine 361 are each glycosylated (N-linked (GlcNAc...) asparagine).

The protein belongs to the serpin family. Ov-serpin subfamily. As to quaternary structure, interacts with IRF6.

It is found in the secreted. The protein localises to the extracellular space. Functionally, tumor suppressor. It blocks the growth, invasion, and metastatic properties of mammary tumors. As it does not undergo the S (stressed) to R (relaxed) conformational transition characteristic of active serpins, it exhibits no serine protease inhibitory activity. This Rattus norvegicus (Rat) protein is Serpin B5 (Serpinb5).